We begin with the raw amino-acid sequence, 432 residues long: UDP-glucose 6-dehydrogenase (432 aa).

NAD(+) is bound by residues 2–19 (NITF…GIIM), Val-11, Asp-30, Lys-35, Thr-121, and Glu-152. Residues 148-152 (EFLRE), Lys-202, Asn-206, 247-251 (FLNAG), and Gly-255 contribute to the substrate site. Cys-258 acts as the Nucleophile in catalysis. NAD(+) is bound at residue Lys-261. Lys-319 serves as a coordination point for substrate. Residue Arg-326 coordinates NAD(+).

The protein belongs to the UDP-glucose/GDP-mannose dehydrogenase family.

It catalyses the reaction UDP-alpha-D-glucose + 2 NAD(+) + H2O = UDP-alpha-D-glucuronate + 2 NADH + 3 H(+). It participates in nucleotide-sugar biosynthesis; UDP-alpha-D-glucuronate biosynthesis; UDP-alpha-D-glucuronate from UDP-alpha-D-glucose: step 1/1. This is UDP-glucose 6-dehydrogenase (udg) from Rickettsia conorii (strain ATCC VR-613 / Malish 7).